Consider the following 100-residue polypeptide: Urease subunit gamma (100 aa).

This sequence belongs to the urease gamma subunit family. Heterotrimer of UreA (gamma), UreB (beta) and UreC (alpha) subunits. Three heterotrimers associate to form the active enzyme.

Its subcellular location is the cytoplasm. The catalysed reaction is urea + 2 H2O + H(+) = hydrogencarbonate + 2 NH4(+). It participates in nitrogen metabolism; urea degradation; CO(2) and NH(3) from urea (urease route): step 1/1. The polypeptide is Urease subunit gamma (Klebsiella pneumoniae).